The chain runs to 445 residues: GTPase Der (445 aa).

2 EngA-type G domains span residues 3–167 (PVIA…YAGE) and 180–353 (IKIA…AAAM). GTP contacts are provided by residues 9–16 (GRPNVGKS), 56–60 (DTGGF), 119–122 (NKAE), 186–193 (GRPNVGKS), 233–237 (DTAGL), and 298–301 (NKWD). The KH-like domain occupies 354-438 (KKLPTPKLTR…PLRIEFRSST (85 aa)).

This sequence belongs to the TRAFAC class TrmE-Era-EngA-EngB-Septin-like GTPase superfamily. EngA (Der) GTPase family. In terms of assembly, associates with the 50S ribosomal subunit.

Functionally, GTPase that plays an essential role in the late steps of ribosome biogenesis. The chain is GTPase Der from Burkholderia pseudomallei (strain 1106a).